The primary structure comprises 748 residues: Long-chain-alcohol oxidase FAO4B (748 aa).

Over residues 1-18 (MEDVRRRNRGHPLLRSKK) the composition is skewed to basic residues. Positions 1-25 (MEDVRRRNRGHPLLRSKKRGEGYNH) are disordered. 2 helical membrane-spanning segments follow: residues 89–109 (IILM…SLCL) and 140–160 (FLLP…FYFF). FAD is bound at residue 238-253 (CDAVVVGSGSGGGVAA). The active-site Proton acceptor is the H679.

This sequence belongs to the GMC oxidoreductase family.

Its subcellular location is the membrane. It carries out the reaction a long-chain primary fatty alcohol + O2 = a long-chain fatty aldehyde + H2O2. Long-chain fatty alcohol oxidase involved in the omega-oxidation pathway of lipid degradation. The chain is Long-chain-alcohol oxidase FAO4B (FAO4B) from Arabidopsis thaliana (Mouse-ear cress).